Consider the following 419-residue polypeptide: Tyrosine--tRNA ligase (419 aa).

Tyrosine 34 serves as a coordination point for L-tyrosine. A 'HIGH' region motif is present at residues 39–48; the sequence is PSGDSMHIGH. L-tyrosine contacts are provided by tyrosine 168 and glutamine 172. A 'KMSKS' region motif is present at residues 230–234; the sequence is KFGKS. Residue lysine 233 coordinates ATP. The S4 RNA-binding domain maps to 352 to 418; it reads VNLVDWLVTL…GKKKYFLVSY (67 aa).

This sequence belongs to the class-I aminoacyl-tRNA synthetase family. TyrS type 1 subfamily. Homodimer.

The protein localises to the cytoplasm. The catalysed reaction is tRNA(Tyr) + L-tyrosine + ATP = L-tyrosyl-tRNA(Tyr) + AMP + diphosphate + H(+). In terms of biological role, catalyzes the attachment of tyrosine to tRNA(Tyr) in a two-step reaction: tyrosine is first activated by ATP to form Tyr-AMP and then transferred to the acceptor end of tRNA(Tyr). This chain is Tyrosine--tRNA ligase, found in Listeria innocua serovar 6a (strain ATCC BAA-680 / CLIP 11262).